A 368-amino-acid chain; its full sequence is MSFDSIPILDLSLARNEETKPAFLRDLRHTLLEVGFLYIKNTGIPETLISDVIAQGKAFFDLPDEEKLAIEMKNKPSFLGYSRLGMEVTRFKVDWREQLDLSTPHPMPGPDDPLYYNLLAPNQWPSTPGFREVYEDYMTRMGKMSIEFTSLIAEAIGLPADAFDRFFDASQQHKLKIVKYPDLAELGVEGEAQGVGPHKDSMLTSYLLQASHHRGLQVQNHEGEWIDCPPIDGTLVVAVGQGMQALTRGVCLSTTHRVLSPARGAGARYSIPFFQGVSYDATFESMDVPESVTALRDEVQARRGAKQDDVEFTFRPGQWDHLGSATLYNRIKSHPDVGEKWDQYPEILAGIRKQHAQQGHVSEALPSG.

The Fe2OG dioxygenase domain maps to 171-277 (QQHKLKIVKY…RYSIPFFQGV (107 aa)). Fe cation-binding residues include H198, D200, and H256. Position 268 (R268) interacts with 2-oxoglutarate.

The protein belongs to the iron/ascorbate-dependent oxidoreductase family.

Its pathway is antifungal biosynthesis. 2-oxoglutarate-dependent dioxygenase; part of the gene cluster that mediates the biosynthesis of the antifungal antibiotic FR901469, an inhibitor of beta-1,3-glucansynthase, exerting antifungal activity against the pathogenes Candida albicans and Aspergillus fumigatus. FR901469 is a cyclic depsipeptide containing 12 amino acid residues and a fatty acid chain. The NRPS frbI contains 12 modules responsible for the formation of the depsipeptide backbone which is denoted as Acyl-Thr-Ala-Tyr-Val-4OHPro-Thr-Thr-3OHPro-threo3OHGln-Gly-Thr-Orn-OH (C71H116N14O23). The PKS frbB is probably involved in the production of the hydrocarbon chain, and the acyl-CoA ligase frbC might be involved in the transport of the chain to the peptide ptoduct of frbI. Because FR901469 contains 3 hydroxylated amino acid residues, the 3 oxygenases frbA, frbH, and frbJ might be participating in amino acid hydroxylation. As no thioesterase domains were detected in frbI or frbB, the thioesterases frbD and frbE may instead release and cyclize the products of the NRPS and PKS, respectively. This is 2-oxoglutarate-dependent dioxygenase frbJ from Dothideomycetidae sp. (strain 11243) (Fungal sp. (strain No.11243)).